A 369-amino-acid polypeptide reads, in one-letter code: MRN complex-interacting protein (369 aa).

Residue Ser-115 is modified to Phosphoserine. 3 disordered regions span residues 122–150 (GGGVCFNSQPSSETEKPDPPFSTGLPRKR), 209–245 (PSFTQDRAGLAGKGRESSREDLDTMELVPRGEPPCPA), and 282–317 (AQAEQGAPRAQTPREGGLCRLPGARQSPQTTHTPMP). A Nuclear localization signal (NLS) motif is present at residues 148 to 151 (RKRK). A compositionally biased stretch (basic and acidic residues) spans 221-230 (KGRESSREDL). Residues 223 to 259 (RESSREDLDTMELVPRGEPPCPAQQVRTMSKWEQCLG) form a necessary for the association with the MRN complex region.

The protein belongs to the MRNIP family. As to quaternary structure, associates with the MRE11-RAD50-NBN (MRN) damage-sensing complex; this association is constitutive. Interacts with MRE11. Interacts with NBN. Interacts with RAD50. In terms of processing, phosphorylated; phosphorylation is constitutive and occurs in the absence of any DNA-damaging stimulus. Phosphorylation on Ser-115 is necessary for its nuclear retention.

Its subcellular location is the nucleus. It localises to the nucleoplasm. Its function is as follows. Plays a role in the cellular response to DNA damage and the maintenance of genome stability through its association with the MRN damage-sensing complex. Promotes chromatin loading and activity of the MRN complex to facilitate subsequent ATM-mediated DNA damage response signaling and DNA repair. This is MRN complex-interacting protein from Bos taurus (Bovine).